The chain runs to 261 residues: Undecaprenyl-diphosphatase (261 aa).

8 helical membrane passes run M1 to V21, F41 to Y61, L69 to F89, A95 to L115, I129 to V149, A169 to L186, I206 to I226, and R241 to I261.

This sequence belongs to the UppP family.

Its subcellular location is the cell inner membrane. It carries out the reaction di-trans,octa-cis-undecaprenyl diphosphate + H2O = di-trans,octa-cis-undecaprenyl phosphate + phosphate + H(+). Functionally, catalyzes the dephosphorylation of undecaprenyl diphosphate (UPP). Confers resistance to bacitracin. In Flavobacterium psychrophilum (strain ATCC 49511 / DSM 21280 / CIP 103535 / JIP02/86), this protein is Undecaprenyl-diphosphatase.